Consider the following 274-residue polypeptide: Small ribosomal subunit protein uS3 (274 aa).

Residues 38 to 106 (IRRLLSSGLE…QVQLNILEVK (69 aa)) form the KH type-2 domain. Positions 215–274 (AAAAPAGADRPRRERPSGTRPRRSGASGTTATGTDAGRAAGGEEAAPDAAAPVEAQSTES) are disordered. The span at 238 to 266 (SGASGTTATGTDAGRAAGGEEAAPDAAAP) shows a compositional bias: low complexity.

This sequence belongs to the universal ribosomal protein uS3 family. Part of the 30S ribosomal subunit. Forms a tight complex with proteins S10 and S14.

Its function is as follows. Binds the lower part of the 30S subunit head. Binds mRNA in the 70S ribosome, positioning it for translation. This chain is Small ribosomal subunit protein uS3, found in Mycobacterium tuberculosis (strain ATCC 25177 / H37Ra).